A 94-amino-acid polypeptide reads, in one-letter code: AVTCTVVTKALGPCMTYLKGTGATPPPANCCAGVRSLKAAAQTVADRRMACNCMKSAAQKTKSLNYKVAARLASQCGVRMSYSVSPNVNCNSVQ.

4 cysteine pairs are disulfide-bonded: Cys4-Cys53, Cys14-Cys30, Cys31-Cys76, and Cys51-Cys90.

In terms of biological role, plant non-specific lipid-transfer proteins transfer phospholipids as well as galactolipids across membranes. May play a role in wax or cutin deposition in the cell walls of expanding epidermal cells and certain secretory tissues. The protein is Non-specific lipid-transfer protein 1 of Amaranthus hypochondriacus (Prince-of-Wales feather).